Here is a 221-residue protein sequence, read N- to C-terminus: MRAVVVLSGGMDSTTLLYDVKSQGYEVFAISFLYGQKHSKELEFAKKTCSLLSIPYKIVDISFFAELAPSALTTPDWNVPEGYYTDSTMKQTVVPNRNMVLLSISAAYAISLGAKKLFYGAHAGDHPIYPDCRKEFVEAMKNALYLADYIGLELEAPYVDMKKEDILRRGLELGVNYSLTWSCYKGGQKACGRCGTCTERIEAFKKVGVKDPIEYEIEIDW.

7 to 17 (LSGGMDSTTLL) serves as a coordination point for ATP. Cys-183, Cys-191, Cys-194, and Cys-197 together coordinate Zn(2+).

Belongs to the QueC family. As to quaternary structure, homodimer. Zn(2+) is required as a cofactor.

It catalyses the reaction 7-carboxy-7-deazaguanine + NH4(+) + ATP = 7-cyano-7-deazaguanine + ADP + phosphate + H2O + H(+). The protein operates within purine metabolism; 7-cyano-7-deazaguanine biosynthesis. Functionally, catalyzes the ATP-dependent conversion of 7-carboxy-7-deazaguanine (CDG) to 7-cyano-7-deazaguanine (preQ(0)). The sequence is that of 7-cyano-7-deazaguanine synthase from Caldicellulosiruptor bescii (strain ATCC BAA-1888 / DSM 6725 / KCTC 15123 / Z-1320) (Anaerocellum thermophilum).